Here is a 48-residue protein sequence, read N- to C-terminus: 4-carboxymuconolactone decarboxylase (48 aa).

The protein belongs to the carboxymuconolactone decarboxylase family.

It catalyses the reaction (R)-2-(carboxymethyl)-5-oxo-2,5-dihydro-2-furoate + H(+) = (4,5-dihydro-5-oxofuran-2-yl)-acetate + CO2. It functions in the pathway aromatic compound metabolism; beta-ketoadipate pathway; 5-oxo-4,5-dihydro-2-furylacetate from 3-carboxy-cis,cis-muconate: step 2/2. The sequence is that of 4-carboxymuconolactone decarboxylase from Pseudomonas putida (Arthrobacter siderocapsulatus).